The following is a 500-amino-acid chain: Lysine--tRNA ligase (500 aa).

Residues Glu-410 and Glu-417 each contribute to the Mg(2+) site.

This sequence belongs to the class-II aminoacyl-tRNA synthetase family. As to quaternary structure, homodimer. Requires Mg(2+) as cofactor.

It localises to the cytoplasm. The enzyme catalyses tRNA(Lys) + L-lysine + ATP = L-lysyl-tRNA(Lys) + AMP + diphosphate. In Shewanella denitrificans (strain OS217 / ATCC BAA-1090 / DSM 15013), this protein is Lysine--tRNA ligase.